An 831-amino-acid polypeptide reads, in one-letter code: Protein ADP-ribosyltransferase PARP3 (831 aa).

Residues 1–69 (MVHETRSRTL…KKLKAEESDL (69 aa)) are disordered. Composition is skewed to basic and acidic residues over residues 15 to 32 (EEGKAAPKKQKTESKEQE) and 43 to 66 (KTADNEEHDGEQEPSKNKKLKAEE). The region spanning 49–199 (EHDGEQEPSK…NKYPKRNLDD (151 aa)) is the PADR1 zinc-binding domain. A zinc ribbon region spans residues 124-168 (GPLDKCPVCGGQLECKGLKYNCTGTHSEWACCSFSTNNPSRRGGP). Zn(2+) is bound by residues C129, C132, C145, and C155. The region spanning 200–290 (EGIFSGMMIA…EKQPLAAYDI (91 aa)) is the BRCT domain. One can recognise a WGR domain in the interval 338-439 (GGHIYEKDGI…KKFKKKCMKM (102 aa)). Residues 466–585 (HCKLDPSVTF…DINVASRLIG (120 aa)) form the PARP alpha-helical domain. A PARP catalytic domain is found at 594-827 (DPLSQCYKKL…VKYEEQNMEV (234 aa)).

The protein belongs to the ARTD/PARP family.

The protein resides in the nucleus. It catalyses the reaction L-aspartyl-[protein] + NAD(+) = 4-O-(ADP-D-ribosyl)-L-aspartyl-[protein] + nicotinamide. It carries out the reaction L-glutamyl-[protein] + NAD(+) = 5-O-(ADP-D-ribosyl)-L-glutamyl-[protein] + nicotinamide. In terms of biological role, involved in the base excision repair (BER) pathway, by catalyzing the poly(ADP-ribosyl)ation of a limited number of acceptor proteins involved in chromatin architecture and in DNA metabolism. This modification follows DNA damages and appears as an obligatory step in a detection/signaling pathway leading to the reparation of DNA strand breaks. The polypeptide is Protein ADP-ribosyltransferase PARP3 (PARP3) (Oryza sativa subsp. japonica (Rice)).